The sequence spans 75 residues: Cytochrome c oxidase subunit 6C (75 aa).

Residues 1 to 13 (MAPEVLPKPRMRG) lie on the Mitochondrial matrix side of the membrane. The helical transmembrane segment at 14–54 (LLARRLRNHMAVAFVLSLGVAALYKFRVADQRKKAYADFYR) threads the bilayer. Over 55 to 75 (NYDVMKDFEEMRKAGIFQSVK) the chain is Mitochondrial intermembrane.

The protein belongs to the cytochrome c oxidase subunit 6c family. As to quaternary structure, component of the cytochrome c oxidase (complex IV, CIV), a multisubunit enzyme composed of 14 subunits. The complex is composed of a catalytic core of 3 subunits MT-CO1, MT-CO2 and MT-CO3, encoded in the mitochondrial DNA, and 11 supernumerary subunits COX4I1 (or COX4I2), COX5A, COX5B, COX6A1 (or COX6A2), COX6B1 (or COX6B2), COX6C, COX7A2 (or COX7A1), COX7B, COX7C, COX8A and NDUFA4, which are encoded in the nuclear genome. The complex exists as a monomer or a dimer and forms supercomplexes (SCs) in the inner mitochondrial membrane with NADH-ubiquinone oxidoreductase (complex I, CI) and ubiquinol-cytochrome c oxidoreductase (cytochrome b-c1 complex, complex III, CIII), resulting in different assemblies (supercomplex SCI(1)III(2)IV(1) and megacomplex MCI(2)III(2)IV(2)).

Its subcellular location is the mitochondrion inner membrane. Its pathway is energy metabolism; oxidative phosphorylation. Component of the cytochrome c oxidase, the last enzyme in the mitochondrial electron transport chain which drives oxidative phosphorylation. The respiratory chain contains 3 multisubunit complexes succinate dehydrogenase (complex II, CII), ubiquinol-cytochrome c oxidoreductase (cytochrome b-c1 complex, complex III, CIII) and cytochrome c oxidase (complex IV, CIV), that cooperate to transfer electrons derived from NADH and succinate to molecular oxygen, creating an electrochemical gradient over the inner membrane that drives transmembrane transport and the ATP synthase. Cytochrome c oxidase is the component of the respiratory chain that catalyzes the reduction of oxygen to water. Electrons originating from reduced cytochrome c in the intermembrane space (IMS) are transferred via the dinuclear copper A center (CU(A)) of subunit 2 and heme A of subunit 1 to the active site in subunit 1, a binuclear center (BNC) formed by heme A3 and copper B (CU(B)). The BNC reduces molecular oxygen to 2 water molecules using 4 electrons from cytochrome c in the IMS and 4 protons from the mitochondrial matrix. This chain is Cytochrome c oxidase subunit 6C (COX6C), found in Homo sapiens (Human).